The chain runs to 57 residues: UPF0434 protein Spea_1772 (57 aa).

It belongs to the UPF0434 family.

The polypeptide is UPF0434 protein Spea_1772 (Shewanella pealeana (strain ATCC 700345 / ANG-SQ1)).